The following is a 154-amino-acid chain: 6,7-dimethyl-8-ribityllumazine synthase (154 aa).

Residues Trp22, 56 to 58 (AWE), and 80 to 82 (CVI) each bind 5-amino-6-(D-ribitylamino)uracil. 85–86 (DT) lines the (2S)-2-hydroxy-3-oxobutyl phosphate pocket. The active-site Proton donor is the His88. A 5-amino-6-(D-ribitylamino)uracil-binding site is contributed by Asn113. (2S)-2-hydroxy-3-oxobutyl phosphate is bound at residue Arg127.

Belongs to the DMRL synthase family. Forms an icosahedral capsid composed of 60 subunits, arranged as a dodecamer of pentamers.

It carries out the reaction (2S)-2-hydroxy-3-oxobutyl phosphate + 5-amino-6-(D-ribitylamino)uracil = 6,7-dimethyl-8-(1-D-ribityl)lumazine + phosphate + 2 H2O + H(+). The protein operates within cofactor biosynthesis; riboflavin biosynthesis; riboflavin from 2-hydroxy-3-oxobutyl phosphate and 5-amino-6-(D-ribitylamino)uracil: step 1/2. In terms of biological role, catalyzes the formation of 6,7-dimethyl-8-ribityllumazine by condensation of 5-amino-6-(D-ribitylamino)uracil with 3,4-dihydroxy-2-butanone 4-phosphate. This is the penultimate step in the biosynthesis of riboflavin. The polypeptide is 6,7-dimethyl-8-ribityllumazine synthase (Xanthomonas oryzae pv. oryzae (strain MAFF 311018)).